The primary structure comprises 93 residues: U12-lycotoxin-Ls1e (93 aa).

The signal sequence occupies residues 1–18 (MKFAVILLFTLVVLAVAS). A propeptide spanning residues 19 to 38 (ESVEEDTREIDVEEFQEQQR) is cleaved from the precursor.

This sequence belongs to the neurotoxin 31 family. Contains 5 disulfide bonds. In terms of tissue distribution, expressed by the venom gland.

Its subcellular location is the secreted. In Lycosa singoriensis (Wolf spider), this protein is U12-lycotoxin-Ls1e.